We begin with the raw amino-acid sequence, 292 residues long: 11-beta-hydroxysteroid dehydrogenase 1 (292 aa).

The Cytoplasmic segment spans residues 1-7; that stretch reads MAFMKKY. A helical; Signal-anchor for type II membrane protein transmembrane segment spans residues 8-24; the sequence is LLPILGLFMAYYYYSAN. Residues 25–292 are Lumenal-facing; it reads EEFRPEMLQG…SYNMDRFINK (268 aa). NADP(+) is bound by residues 41 to 67, 92 to 93, and 119 to 121; these read GASKGIGREMAYHLAKMGAHVVVTARS, TM, and NHI. N-linked (GlcNAc...) asparagine glycans are attached at residues N123 and N162. S170 is a binding site for substrate. The active-site Proton acceptor is Y183. NADP(+) is bound at residue 183 to 187; sequence YSASK. N-linked (GlcNAc...) asparagine glycosylation occurs at N207. 218–222 is a binding site for NADP(+); that stretch reads IDTET.

It belongs to the short-chain dehydrogenases/reductases (SDR) family. Homodimer. In terms of processing, glycosylated. In terms of tissue distribution, widely expressed, highest expression in liver, lower in testis, ovary, lung, foreskin fibroblasts, and much lower in kidney. Expressed in liver (at protein level). Expressed in the basal cells of the corneal epithelium and in the ciliary nonpigmented epithelium (both at mRNA and at protein level).

The protein resides in the endoplasmic reticulum membrane. It carries out the reaction an 11beta-hydroxysteroid + NADP(+) = an 11-oxosteroid + NADPH + H(+). The enzyme catalyses cortisone + NADPH + H(+) = cortisol + NADP(+). It catalyses the reaction corticosterone + NADP(+) = 11-dehydrocorticosterone + NADPH + H(+). The catalysed reaction is a 7beta-hydroxysteroid + NADP(+) = a 7-oxosteroid + NADPH + H(+). It carries out the reaction 7-oxocholesterol + NADPH + H(+) = 7beta-hydroxycholesterol + NADP(+). The enzyme catalyses chenodeoxycholate + NADP(+) = 7-oxolithocholate + NADPH + H(+). It catalyses the reaction 7-oxolithocholate + NADPH + H(+) = ursodeoxycholate + NADP(+). The catalysed reaction is glycochenodeoxycholate + NADP(+) = 7-oxoglycolithocholate + NADPH + H(+). It carries out the reaction taurochenodeoxycholate + NADP(+) = 7-oxotaurolithocholate + NADPH + H(+). The enzyme catalyses tauroursodeoxycholate + NADP(+) = 7-oxotaurolithocholate + NADPH + H(+). It catalyses the reaction glycoursodeoxycholate + NADP(+) = 7-oxoglycolithocholate + NADPH + H(+). The catalysed reaction is 7-oxopregnenolone + NADPH + H(+) = 7beta-hydroxypregnenolone + NADP(+). It carries out the reaction 3beta,7alpha-dihydroxyandrost-5-en-17-one + NADP(+) = 3beta-hydroxy-5-androstene-7,17-dione + NADPH + H(+). The enzyme catalyses 3beta-hydroxy-5-androstene-7,17-dione + NADPH + H(+) = 3beta,7beta-dihydroxyandrost-5-en-17-one + NADP(+). It catalyses the reaction 3beta-hydroxy-5alpha-androstane-7,17-dione + NADPH + H(+) = 3beta,7beta-dihydroxy-5alpha-androstan-17-one + NADP(+). Its pathway is steroid metabolism. With respect to regulation, hexose-6-phosphate dehydrogenase (H6PD) provides cosubstrate NADPH, and the glucose-6-phosphate transporter in the ER-membrane supplies the substrate for H6PDH, their activities stimulate the reduction of cortisone and abolish the oxidation of cortisol. Its function is as follows. Controls the reversible conversion of biologically active glucocorticoids such as cortisone to cortisol, and 11-dehydrocorticosterone to corticosterone in the presence of NADP(H). Participates in the corticosteroid receptor-mediated anti-inflammatory response, as well as metabolic and homeostatic processes. Plays a role in the secretion of aqueous humor in the eye, maintaining a normotensive, intraocular environment. Bidirectional in vitro, predominantly functions as a reductase in vivo, thereby increasing the concentration of active glucocorticoids. It has broad substrate specificity, besides glucocorticoids, it accepts other steroid and sterol substrates. Interconverts 7-oxo- and 7-hydroxy-neurosteroids such as 7-oxopregnenolone and 7beta-hydroxypregnenolone, 7-oxodehydroepiandrosterone (3beta-hydroxy-5-androstene-7,17-dione) and 7beta-hydroxydehydroepiandrosterone (3beta,7beta-dihydroxyandrost-5-en-17-one), among others. Catalyzes the stereo-specific conversion of the major dietary oxysterol, 7-ketocholesterol (7-oxocholesterol), into the more polar 7-beta-hydroxycholesterol metabolite. 7-oxocholesterol is one of the most important oxysterols, it participates in several events such as induction of apoptosis, accumulation in atherosclerotic lesions, lipid peroxidation, and induction of foam cell formation. Mediates the 7-oxo reduction of 7-oxolithocholate mainly to chenodeoxycholate, and to a lesser extent to ursodeoxycholate, both in its free form and when conjugated to glycine or taurine, providing a link between glucocorticoid activation and bile acid metabolism. Catalyzes the synthesis of 7-beta-25-dihydroxycholesterol from 7-oxo-25-hydroxycholesterol in vitro, which acts as a ligand for the G-protein-coupled receptor (GPCR) Epstein-Barr virus-induced gene 2 (EBI2) and may thereby regulate immune cell migration. This Homo sapiens (Human) protein is 11-beta-hydroxysteroid dehydrogenase 1.